The primary structure comprises 891 residues: DNA mismatch repair protein MutS (891 aa).

ATP is bound at residue 639–646; sequence GPNMAGKS. The disordered stretch occupies residues 827-854; the sequence is TIQEARPSAQGSEEKTPSSPAEKGLSLF.

The protein belongs to the DNA mismatch repair MutS family.

In terms of biological role, this protein is involved in the repair of mismatches in DNA. It is possible that it carries out the mismatch recognition step. This protein has a weak ATPase activity. The protein is DNA mismatch repair protein MutS of Treponema denticola (strain ATCC 35405 / DSM 14222 / CIP 103919 / JCM 8153 / KCTC 15104).